Reading from the N-terminus, the 784-residue chain is Cadherin-5 (784 aa).

Residues 1-25 (MQRLMMLLATSGACLGLLAVAAVAA) form the signal peptide. A propeptide spanning residues 26–47 (AGANPAQRDTHSLLPTHRRQKR) is cleaved from the precursor. Cadherin domains lie at 48–151 (DWIW…WPVF), 152–258 (THRL…FPFF), 259–372 (TQTK…PPIF), 373–477 (QQPF…DNAP), and 478–593 (EFAK…MAAQ). The Extracellular portion of the chain corresponds to 48-599 (DWIWNQMHID…MAAQVGVSIQ (552 aa)). Ca(2+)-binding residues include Glu-58 and Glu-59. Asn-61 carries an N-linked (GlcNAc...) (complex) asparagine glycan. Positions 109 and 111 each coordinate Ca(2+). An N-linked (GlcNAc...) (complex) asparagine glycan is attached at Asn-112. Residues Asp-143, Val-144, Asn-145, Asp-146, and Asn-147 each coordinate Ca(2+). Residue Asn-157 is glycosylated (N-linked (GlcNAc...) asparagine). Ca(2+) contacts are provided by Asp-177, Asp-179, His-186, and Asp-231. Asn-362 carries an N-linked (GlcNAc...) asparagine glycan. Residue Asn-442 is glycosylated (N-linked (GlcNAc...) (complex) asparagine). 2 N-linked (GlcNAc...) asparagine glycosylation sites follow: Asn-523 and Asn-535. Residues 600-620 (AVVAILLCILTITVITLLIFL) form a helical membrane-spanning segment. The segment at 621-660 (RRRLRKQARAHGKSVPEIHEQLVTYDEEGGGEMDTTSYDV) is required for interaction with PALS1. Residues 621-784 (RRRLRKQARA…GSDPREELLY (164 aa)) are Cytoplasmic-facing.

Part of a complex composed of AMOTL2, MAGI1 and CDH5, within the complex AMOTL2 acts as a scaffold protein for the interaction of MAGI1 with CDH5. The complex is required for coupling actin fibers to cell junctions in endothelial cells. Within the complex AMOTL2 (via its N-terminus) interacts with CDH5. Interacts (via cadherin 5 domain) with PTPRB. Interacts with TRPC4. Interacts with KRIT1. Interacts with PARD3. Interacts with RTN4 (isoform B). Interacts with PALS1; the interaction promotes PALS1 localization to cell junctions and is required for CDH5-mediated vascular lumen formation and endothelial cell. Interacts with CTNND1/p120-catenin; the interaction controls CADH5 endocytosis. Phosphorylated on tyrosine residues by KDR/VEGFR-2. Dephosphorylated by PTPRB. Post-translationally, O-glycosylated. As to expression, expressed in endothelial cells (at protein level). Expressed in the brain.

The protein resides in the cell junction. The protein localises to the adherens junction. Its subcellular location is the cell membrane. It localises to the cytoplasm. Functionally, cadherins are calcium-dependent cell adhesion proteins. They preferentially interact with themselves in a homophilic manner in connecting cells; cadherins may thus contribute to the sorting of heterogeneous cell types. This cadherin may play a important role in endothelial cell biology through control of the cohesion and organization of the intercellular junctions. It associates with alpha-catenin forming a link to the cytoskeleton. Plays a role in coupling actin fibers to cell junctions in endothelial cells, via acting as a cell junctional complex anchor for AMOTL2 and MAGI1. Acts in concert with KRIT1 and PALS1 to establish and maintain correct endothelial cell polarity and vascular lumen. These effects are mediated by recruitment and activation of the Par polarity complex and RAP1B. Required for activation of PRKCZ and for the localization of phosphorylated PRKCZ, PARD3, TIAM1 and RAP1B to the cell junction. Associates with CTNND1/p120-catenin to control CADH5 endocytosis. This Homo sapiens (Human) protein is Cadherin-5.